We begin with the raw amino-acid sequence, 245 residues long: Epoxyqueuosine reductase QueH (245 aa).

Cysteine 52, cysteine 53, cysteine 131, and cysteine 134 together coordinate [4Fe-4S] cluster. Cysteine 214 and cysteine 216 are disulfide-bonded.

Belongs to the QueH family.

It catalyses the reaction epoxyqueuosine(34) in tRNA + AH2 = queuosine(34) in tRNA + A + H2O. It functions in the pathway tRNA modification; tRNA-queuosine biosynthesis. Its function is as follows. Catalyzes the conversion of epoxyqueuosine (oQ) to queuosine (Q), which is a hypermodified base found in the wobble positions of tRNA(Asp), tRNA(Asn), tRNA(His) and tRNA(Tyr). The polypeptide is Epoxyqueuosine reductase QueH (Haemophilus influenzae (strain ATCC 51907 / DSM 11121 / KW20 / Rd)).